Here is a 433-residue protein sequence, read N- to C-terminus: Enolase (433 aa).

Q167 serves as a coordination point for (2R)-2-phosphoglycerate. The Proton donor role is filled by E209. Mg(2+) is bound by residues D246, E291, and D318. The (2R)-2-phosphoglycerate site is built by K343, R372, S373, and K394. K343 functions as the Proton acceptor in the catalytic mechanism.

The protein belongs to the enolase family. As to quaternary structure, component of the RNA degradosome, a multiprotein complex involved in RNA processing and mRNA degradation. Mg(2+) is required as a cofactor.

The protein resides in the cytoplasm. The protein localises to the secreted. It localises to the cell surface. The enzyme catalyses (2R)-2-phosphoglycerate = phosphoenolpyruvate + H2O. It participates in carbohydrate degradation; glycolysis; pyruvate from D-glyceraldehyde 3-phosphate: step 4/5. Its function is as follows. Catalyzes the reversible conversion of 2-phosphoglycerate (2-PG) into phosphoenolpyruvate (PEP). It is essential for the degradation of carbohydrates via glycolysis. This is Enolase from Hamiltonella defensa subsp. Acyrthosiphon pisum (strain 5AT).